A 540-amino-acid polypeptide reads, in one-letter code: MLO protein homolog 1 (540 aa).

The Extracellular portion of the chain corresponds to 1–16 (MAGGRSGSRELPETPT). The chain crosses the membrane as a helical span at residues 17 to 37 (WAVAVVCAVLVLVSVAMEHGL). At 38-60 (HNLSHWFRRRQKKAMGDALDKIK) the chain is on the cytoplasmic side. A helical transmembrane segment spans residues 61 to 81 (AELMLLGFISLLLTVAQAPIS). Over 82–142 (KICIPKSAAN…MSAKSMHQLH (61 aa)) the chain is Extracellular. Residues 143–163 (IFIFVLAVFHVTYCVITMGLG) traverse the membrane as a helical segment. The Cytoplasmic segment spans residues 164–265 (RLKMKKWKKW…IKRSLEDDFK (102 aa)). A helical transmembrane segment spans residues 266-286 (VVVGISLPLWFVGILVLFLDI). A topological domain (extracellular) is located at residue histidine 287. Residues 288 to 308 (GLGTLIWISFVPLIIVLLVGT) traverse the membrane as a helical segment. Residues 309–347 (KLEMVIMQMAQEIQDRATVIQGAPVVEPSNKYFWFNRPD) lie on the Cytoplasmic side of the membrane. A helical transmembrane segment spans residues 348 to 368 (WVLFFIHLTLFHNAFQMAHFV). Over 369–383 (WTMATPGLKKCFHEN) the chain is Extracellular. The chain crosses the membrane as a helical span at residues 384 to 404 (IWLSIVEVIVGISLQVLCSYI). Residues 405-540 (TFPLYALVTQ…DSDFSFSAQR (136 aa)) are Cytoplasmic-facing. A calmodulin-binding region spans residues 426–447 (EQTMKALMNWRKKAMEKKKVRD). Residues 468 to 526 (ASPVHLLQDHRARSDDPPSPITVASPPAPEEDIYPVPAAAASRQLLDDPPDRRWMASSS) are disordered. Basic and acidic residues-rich tracts occupy residues 474-483 (LQDHRARSDD) and 512-521 (LLDDPPDRRW).

Belongs to the MLO family.

It localises to the membrane. May be involved in modulation of pathogen defense and leaf cell death. Activity seems to be regulated by Ca(2+)-dependent calmodulin binding and seems not to require heterotrimeric G proteins. The chain is MLO protein homolog 1 (MLO1) from Oryza sativa subsp. japonica (Rice).